The following is a 121-amino-acid chain: Ribonuclease P protein component (121 aa).

This sequence belongs to the RnpA family. In terms of assembly, consists of a catalytic RNA component (M1 or rnpB) and a protein subunit.

The catalysed reaction is Endonucleolytic cleavage of RNA, removing 5'-extranucleotides from tRNA precursor.. Its function is as follows. RNaseP catalyzes the removal of the 5'-leader sequence from pre-tRNA to produce the mature 5'-terminus. It can also cleave other RNA substrates such as 4.5S RNA. The protein component plays an auxiliary but essential role in vivo by binding to the 5'-leader sequence and broadening the substrate specificity of the ribozyme. The sequence is that of Ribonuclease P protein component from Geobacillus kaustophilus (strain HTA426).